The following is a 269-amino-acid chain: Glutamate 5-kinase 2 (269 aa).

Lys-16 provides a ligand contact to ATP. Residues Ser-57, Asp-144, and Asn-156 each coordinate substrate. 218-224 (SGGMISK) provides a ligand contact to ATP.

The protein belongs to the glutamate 5-kinase family.

It is found in the cytoplasm. The enzyme catalyses L-glutamate + ATP = L-glutamyl 5-phosphate + ADP. It functions in the pathway amino-acid biosynthesis; L-proline biosynthesis; L-glutamate 5-semialdehyde from L-glutamate: step 1/2. In terms of biological role, catalyzes the transfer of a phosphate group to glutamate to form L-glutamate 5-phosphate. This chain is Glutamate 5-kinase 2, found in Rhizobium meliloti (strain 1021) (Ensifer meliloti).